The chain runs to 474 residues: Protein FAM161A (474 aa).

3 disordered regions span residues 78–126 (SSSS…PGEI), 185–210 (QKRR…DDAE), and 308–364 (REEL…DQGL). Positions 188–250 (REKASDAQET…KKTRERSKAA (63 aa)) form a coiled coil. Positions 274 to 454 (KLRELCRAKK…PTASSRGREQ (181 aa)) are required for interaction with CFAP418. Residues 325 to 335 (LQSSPWPSHST) are compositionally biased toward polar residues. Glycyl lysine isopeptide (Lys-Gly) (interchain with G-Cter in SUMO2) cross-links involve residues Lys397 and Lys413. The disordered stretch occupies residues 412-474 (LKETRRPNPS…KELARIGGAR (63 aa)). Basic residues predominate over residues 422 to 431 (PRHKSPRRSA). Over residues 450–468 (RGREQAIRRSEKARMKELA) the composition is skewed to basic and acidic residues.

The protein belongs to the FAM161 family. Interacts (via central region) with CFAP418 (via N-terminus); the interaction is direct. Interacts (via C-terminus) with microtubules. Interacts with LCA5. Interacts with CEP290. Interacts with SDCCAG8. Interacts with FAM161B. Interacts with POC1B. Interacts with CEP78. Forms a microtubule-associated complex with POC5, CETN2 and POC1B. Interacts with CCDC15. Expressed in the retina and kidney.

The protein localises to the cytoplasm. Its subcellular location is the cytoskeleton. It localises to the cilium basal body. It is found in the cell projection. The protein resides in the cilium. The protein localises to the microtubule organizing center. Its subcellular location is the centrosome. It localises to the centriole. Involved in ciliogenesis. This is Protein FAM161A from Rattus norvegicus (Rat).